A 208-amino-acid polypeptide reads, in one-letter code: Uracil phosphoribosyltransferase (208 aa).

5-phospho-alpha-D-ribose 1-diphosphate contacts are provided by residues Arg-78, Arg-103, and 130-138 (DPMLATGGS). Residues Ile-193 and 198–200 (GDA) contribute to the uracil site. 5-phospho-alpha-D-ribose 1-diphosphate is bound at residue Asp-199.

Belongs to the UPRTase family. Mg(2+) is required as a cofactor.

It carries out the reaction UMP + diphosphate = 5-phospho-alpha-D-ribose 1-diphosphate + uracil. The protein operates within pyrimidine metabolism; UMP biosynthesis via salvage pathway; UMP from uracil: step 1/1. Its activity is regulated as follows. Allosterically activated by GTP. Functionally, catalyzes the conversion of uracil and 5-phospho-alpha-D-ribose 1-diphosphate (PRPP) to UMP and diphosphate. The sequence is that of Uracil phosphoribosyltransferase from Thermus thermophilus (strain ATCC 27634 / DSM 579 / HB8).